Consider the following 406-residue polypeptide: Phloroisovalerophenone synthase (406 aa).

Residue cysteine 171 is part of the active site.

Belongs to the thiolase-like superfamily. Chalcone/stilbene synthases family.

The catalysed reaction is 3-methylbutanoyl-CoA + 3 malonyl-CoA + 3 H(+) = phlorisovalerophenone + 3 CO2 + 4 CoA. Its function is as follows. Produces 3-methyl-1-(2,4,6-trihydroxyphenyl)butan-1-one (phloroisovalerophenone). This chain is Phloroisovalerophenone synthase (VPS), found in Psilotum nudum (Whisk fern).